We begin with the raw amino-acid sequence, 119 residues long: Large ribosomal subunit protein uL24 (119 aa).

It belongs to the universal ribosomal protein uL24 family. In terms of assembly, part of the 50S ribosomal subunit.

In terms of biological role, one of two assembly initiator proteins, it binds directly to the 5'-end of the 23S rRNA, where it nucleates assembly of the 50S subunit. Located at the polypeptide exit tunnel on the outside of the subunit. This Methanococcus maripaludis (strain DSM 14266 / JCM 13030 / NBRC 101832 / S2 / LL) protein is Large ribosomal subunit protein uL24.